Reading from the N-terminus, the 410-residue chain is Peptidase T (410 aa).

Position 79 (His-79) interacts with Zn(2+). Asp-81 is a catalytic residue. Asp-142 is a binding site for Zn(2+). Glu-176 serves as the catalytic Proton acceptor. Residues Glu-177, Asp-199, and His-381 each coordinate Zn(2+).

This sequence belongs to the peptidase M20B family. Zn(2+) is required as a cofactor.

The protein resides in the cytoplasm. It catalyses the reaction Release of the N-terminal residue from a tripeptide.. Cleaves the N-terminal amino acid of tripeptides. In Listeria monocytogenes serotype 4b (strain F2365), this protein is Peptidase T.